The chain runs to 54 residues: Ovomucoid (54 aa).

A Kazal-like domain is found at valine 4–cysteine 54. Disulfide bonds link cysteine 6–cysteine 36, cysteine 14–cysteine 33, and cysteine 22–cysteine 54.

Post-translationally, this is the only ovomucoid third domain known to be not glycosylated.

Its subcellular location is the secreted. The polypeptide is Ovomucoid (Struthio camelus (Common ostrich)).